The primary structure comprises 504 residues: MNIDLKRTPLMVLGTSSGAGKTLIATAICRCLKRKGEQPIPFKGQNMSNNAWVDTKGREMAYSQALQSWSAGLEPSAEMNPVLLKPKGDCTSEVIHLGKSVGTSRAINYYEDWFDSGWEAIKKGLAILLKSKTDGRLILEGAGSPVEVNLQHKDLTNLKLAKYLNANCILVADIERGGVFAQIIGTIALMKPDEKKLIKGIIINRFRGDKALFETGVTWIEKETGIPVLGILPWLKEIFPPEDSLDLLERKQINQGAEIEIAIIKLPRISNFSDLDPFFSDSSIQMRWIEPGQELGEPDVLIIPGSKQTIKDLESLNKTGLSNQIKNYAKKGGNIFGICGGLQMLGKSLEDPHQQESINETSTSSNMGMNLLPIKTTFREIKHTSQREEKVSWPFSQNIKGFEMHYGESDLINNKDSEIISLFKNSSLGWVIEKKDKSFVGGTYLHGIFENDEWRRQWINKIRQKKGLNHLKIDEENNSDKRERLLDLLTDAFEKNINIDILIK.

Residues 258–454 (EIEIAIIKLP…LHGIFENDEW (197 aa)) enclose the GATase cobBQ-type domain. Cysteine 339 (nucleophile) is an active-site residue. Histidine 446 is a catalytic residue.

This sequence belongs to the CobB/CobQ family. CobQ subfamily.

Its pathway is cofactor biosynthesis; adenosylcobalamin biosynthesis. Functionally, catalyzes amidations at positions B, D, E, and G on adenosylcobyrinic A,C-diamide. NH(2) groups are provided by glutamine, and one molecule of ATP is hydrogenolyzed for each amidation. In Prochlorococcus marinus (strain NATL2A), this protein is Cobyric acid synthase.